Consider the following 32-residue polypeptide: Defensin-3 (32 aa).

3 cysteine pairs are disulfide-bonded: Cys-3-Cys-31, Cys-5-Cys-20, and Cys-10-Cys-30.

The protein resides in the secreted. Functionally, has antibacterial activity against the Gram-negative bacterium E.coli and the Gram-positive bacteria L.monocytogenes and S.aureus. Has antifungal activity against C.albicans. The polypeptide is Defensin-3 (Papio hamadryas (Hamadryas baboon)).